We begin with the raw amino-acid sequence, 121 residues long: Large ribosomal subunit protein bL20 (121 aa).

It belongs to the bacterial ribosomal protein bL20 family.

Its function is as follows. Binds directly to 23S ribosomal RNA and is necessary for the in vitro assembly process of the 50S ribosomal subunit. It is not involved in the protein synthesizing functions of that subunit. The chain is Large ribosomal subunit protein bL20 from Francisella tularensis subsp. mediasiatica (strain FSC147).